A 797-amino-acid chain; its full sequence is Leucine-rich repeat-containing protein AAC1 (797 aa).

A compositionally biased stretch (basic and acidic residues) spans 1 to 12 (MKRTSNRNEEAT). Disordered regions lie at residues 1-20 (MKRT…SSTT), 51-103 (YSLF…TTTT), 125-148 (NLPT…TTTT), and 307-333 (HSTS…TITA). Residues 55–81 (NEPNNDNDTNSSTRPNKQQKLLKSNES) are compositionally biased toward polar residues. Residues 82–103 (TTSTTTTTTPITTTTTTTTTTT) are compositionally biased toward low complexity. A compositionally biased stretch (pro residues) spans 313 to 326 (SSPPPPPPPPPPQI). LRR repeat units follow at residues 376–397 (KLKK…DFFS), 406–425 (TLET…QLLS), 435–456 (VLKR…YLNK), 464–484 (QLET…IMMK), 492–513 (SLKE…DFGK), 514–535 (SITS…KGLS), 543–564 (SITS…KSLS), 572–593 (TLKF…DHLV), 601–622 (SIHS…TLSQ), and 633–653 (PFKY…KKLI).

The polypeptide is Leucine-rich repeat-containing protein AAC1 (AAC1) (Dictyostelium discoideum (Social amoeba)).